The sequence spans 363 residues: Probable auxin efflux carrier component 5a (363 aa).

The next 10 helical transmembrane spans lie at 7–27, 39–59, 72–92, 103–123, 134–154, 222–242, 246–266, 281–301, 307–327, and 342–362; these read VYKV…GYGS, CDAV…FEFT, VAAD…WARF, SITS…VPMA, LVVQ…LFVL, FVGI…PSAF, VLIM…LFMA, LGLV…SIAV, VLRV…FIFA, and IFGM…LELI.

It belongs to the auxin efflux carrier (TC 2.A.69.1) family. Expressed in leaves, shoot apex and panicles. Expressed in roots, stem bases, stems, leaves and young panicles.

The protein resides in the membrane. Functionally, may act as a component of the auxin efflux carrier. The polypeptide is Probable auxin efflux carrier component 5a (Oryza sativa subsp. japonica (Rice)).